We begin with the raw amino-acid sequence, 319 residues long: tRNA pseudouridine synthase B (319 aa).

Residue Asp49 is the Nucleophile of the active site.

This sequence belongs to the pseudouridine synthase TruB family. Type 1 subfamily.

The enzyme catalyses uridine(55) in tRNA = pseudouridine(55) in tRNA. Responsible for synthesis of pseudouridine from uracil-55 in the psi GC loop of transfer RNAs. The polypeptide is tRNA pseudouridine synthase B (Aeromonas salmonicida (strain A449)).